Reading from the N-terminus, the 226-residue chain is Small ribosomal subunit protein uS5 (226 aa).

The disordered stretch occupies residues 1–71 (MEDIKHNKKP…RKNEKRTKSE (71 aa)). Over residues 24 to 54 (ANPQANHANPNNRSASVNNNSVNNNKKNSSR) the composition is skewed to low complexity. One can recognise an S5 DRBM domain in the interval 72–135 (FEEKIVKISR…KMAENNVQKI (64 aa)).

Belongs to the universal ribosomal protein uS5 family. As to quaternary structure, part of the 30S ribosomal subunit. Contacts proteins S4 and S8.

In terms of biological role, with S4 and S12 plays an important role in translational accuracy. Its function is as follows. Located at the back of the 30S subunit body where it stabilizes the conformation of the head with respect to the body. This is Small ribosomal subunit protein uS5 from Mycoplasmoides gallisepticum (strain R(low / passage 15 / clone 2)) (Mycoplasma gallisepticum).